Here is a 432-residue protein sequence, read N- to C-terminus: MNQMLAAWQGTVTPEMEQVARDEGYPVEPVLQGVAAGTIVIPANMRRKNLKAVGIGTGLRTKVNANIGTSPKQSALDDHRVKLRVALDAGADAVMDLSTGGDLDRCRREILASCPVPVGTVPIYQAAIEAKERYGAIVAMREDELFEVVERQAKDGVDFFTIHAGVTLESLDRLRKQGRLTDIVSRGGSFLTGWMLHNDRENPFYKEFDRLLEICLAYDVALSLGDGMRPGCQADATDRAQVQELLILGELVDRCREAGVQVFVEGPGHVPLDQIIMNVQLQKRLCKGAPFYVLGPLVTDVAPGYDHITAAIGGAVAAMAGADFLCYVTPAEHLGLPTVEDVREGVIATRIAGHAADLVKRVPGAREWDERMSRARKALDWEKQIELAIDPEKARRYHTERNPEKFAGCTMCGEFCAMKLVGEYLGKDYENC.

Substrate is bound by residues N66, M95, Y124, H163, 185 to 187, 226 to 229, and E265; these read SRG and DGMR. Zn(2+) is bound at residue H269. Y292 is a binding site for substrate. H333 is a Zn(2+) binding site. Residues C409, C412, and C416 each contribute to the [4Fe-4S] cluster site.

The protein belongs to the ThiC family. [4Fe-4S] cluster is required as a cofactor.

The enzyme catalyses 5-amino-1-(5-phospho-beta-D-ribosyl)imidazole + S-adenosyl-L-methionine = 4-amino-2-methyl-5-(phosphooxymethyl)pyrimidine + CO + 5'-deoxyadenosine + formate + L-methionine + 3 H(+). It functions in the pathway cofactor biosynthesis; thiamine diphosphate biosynthesis. Its function is as follows. Catalyzes the synthesis of the hydroxymethylpyrimidine phosphate (HMP-P) moiety of thiamine from aminoimidazole ribotide (AIR) in a radical S-adenosyl-L-methionine (SAM)-dependent reaction. The protein is Phosphomethylpyrimidine synthase of Desulforudis audaxviator (strain MP104C).